A 314-amino-acid chain; its full sequence is uncharacterized protein (314 aa).

Residues 1–71 (MAGNSQRRGA…QRAGRKADET (71 aa)) form a disordered region. 3 residues coordinate S-adenosyl-L-methionine: Gly-266, Ile-286, and Leu-295.

It belongs to the class IV-like SAM-binding methyltransferase superfamily. RNA methyltransferase TrmH family.

This is an uncharacterized protein from Mycolicibacterium smegmatis (strain ATCC 700084 / mc(2)155) (Mycobacterium smegmatis).